The primary structure comprises 209 residues: Fibroblast growth factor 10 (209 aa).

Residues 1 to 36 (MWKWILTHCASAFPHLPGCCCCFLLLFLVSSFPVTC) form the signal peptide. 2 N-linked (GlcNAc...) asparagine glycosylation sites follow: Asn-50 and Asn-197.

This sequence belongs to the heparin-binding growth factors family. In terms of assembly, interacts with FGFR1 and FGFR2. Interacts with FGFBP1. As to expression, expressed abundantly in embryos and the lung, and at much lower levels in brain and heart.

Its subcellular location is the secreted. Functionally, plays an important role in the regulation of embryonic development, cell proliferation and cell differentiation. Required for normal branching morphogenesis. May play a role in wound healing. This Mus musculus (Mouse) protein is Fibroblast growth factor 10 (Fgf10).